The sequence spans 955 residues: Bifunctional glutamine synthetase adenylyltransferase/adenylyl-removing enzyme (955 aa).

The interval 1-458 is adenylyl removase; sequence MTAQAPLSVA…QFEQTFSDKQ (458 aa). Positions 464–955 are adenylyl transferase; that stretch reads CAAIWHADLL…GSIDAASPTP (492 aa).

Belongs to the GlnE family. Mg(2+) serves as cofactor.

The enzyme catalyses [glutamine synthetase]-O(4)-(5'-adenylyl)-L-tyrosine + phosphate = [glutamine synthetase]-L-tyrosine + ADP. The catalysed reaction is [glutamine synthetase]-L-tyrosine + ATP = [glutamine synthetase]-O(4)-(5'-adenylyl)-L-tyrosine + diphosphate. Its function is as follows. Involved in the regulation of glutamine synthetase GlnA, a key enzyme in the process to assimilate ammonia. When cellular nitrogen levels are high, the C-terminal adenylyl transferase (AT) inactivates GlnA by covalent transfer of an adenylyl group from ATP to specific tyrosine residue of GlnA, thus reducing its activity. Conversely, when nitrogen levels are low, the N-terminal adenylyl removase (AR) activates GlnA by removing the adenylyl group by phosphorolysis, increasing its activity. The regulatory region of GlnE binds the signal transduction protein PII (GlnB) which indicates the nitrogen status of the cell. The polypeptide is Bifunctional glutamine synthetase adenylyltransferase/adenylyl-removing enzyme (Ralstonia nicotianae (strain ATCC BAA-1114 / GMI1000) (Ralstonia solanacearum)).